The primary structure comprises 110 residues: Nucleoid-associated protein PERMA_0533 (110 aa).

The protein belongs to the YbaB/EbfC family. As to quaternary structure, homodimer.

The protein resides in the cytoplasm. It is found in the nucleoid. Binds to DNA and alters its conformation. May be involved in regulation of gene expression, nucleoid organization and DNA protection. This is Nucleoid-associated protein PERMA_0533 from Persephonella marina (strain DSM 14350 / EX-H1).